Consider the following 270-residue polypeptide: Glutamate racemase (270 aa).

Substrate contacts are provided by residues 7-8 and 39-40; these read DS and YG. Residue C70 is the Proton donor/acceptor of the active site. 71-72 contributes to the substrate binding site; it reads NT. C194 serves as the catalytic Proton donor/acceptor. Position 195-196 (195-196) interacts with substrate; it reads TH.

The protein belongs to the aspartate/glutamate racemases family.

The enzyme catalyses L-glutamate = D-glutamate. Its pathway is cell wall biogenesis; peptidoglycan biosynthesis. Provides the (R)-glutamate required for cell wall biosynthesis. The polypeptide is Glutamate racemase (Cereibacter sphaeroides (strain ATCC 17025 / ATH 2.4.3) (Rhodobacter sphaeroides)).